A 189-amino-acid chain; its full sequence is ATP synthase subunit delta (189 aa).

The protein belongs to the ATPase delta chain family. F-type ATPases have 2 components, F(1) - the catalytic core - and F(0) - the membrane proton channel. F(1) has five subunits: alpha(3), beta(3), gamma(1), delta(1), epsilon(1). F(0) has three main subunits: a(1), b(2) and c(10-14). The alpha and beta chains form an alternating ring which encloses part of the gamma chain. F(1) is attached to F(0) by a central stalk formed by the gamma and epsilon chains, while a peripheral stalk is formed by the delta and b chains.

It is found in the cell inner membrane. F(1)F(0) ATP synthase produces ATP from ADP in the presence of a proton or sodium gradient. F-type ATPases consist of two structural domains, F(1) containing the extramembraneous catalytic core and F(0) containing the membrane proton channel, linked together by a central stalk and a peripheral stalk. During catalysis, ATP synthesis in the catalytic domain of F(1) is coupled via a rotary mechanism of the central stalk subunits to proton translocation. In terms of biological role, this protein is part of the stalk that links CF(0) to CF(1). It either transmits conformational changes from CF(0) to CF(1) or is implicated in proton conduction. The sequence is that of ATP synthase subunit delta from Methylorubrum extorquens (strain CM4 / NCIMB 13688) (Methylobacterium extorquens).